The sequence spans 310 residues: Protein translocase subunit SecF (310 aa).

6 consecutive transmembrane segments (helical) span residues 20–42 (FKKV…IGIY), 140–160 (IEAG…YIWV), 164–184 (WYFG…ALGF), 194–214 (LSTI…SVVI), 246–266 (ILTV…GGEA), and 272–292 (VLVF…SAPI).

Belongs to the SecD/SecF family. SecF subfamily. As to quaternary structure, forms a complex with SecD. Part of the essential Sec protein translocation apparatus which comprises SecA, SecYEG and auxiliary proteins SecDF-YajC and YidC.

It localises to the cell inner membrane. Functionally, part of the Sec protein translocase complex. Interacts with the SecYEG preprotein conducting channel. SecDF uses the proton motive force (PMF) to complete protein translocation after the ATP-dependent function of SecA. In Rickettsia canadensis (strain McKiel), this protein is Protein translocase subunit SecF.